The following is a 180-amino-acid chain: F17 fimbrial protein (180 aa).

An N-terminal signal peptide occupies residues 1-21 (MQKIQFILGILAAASSSATLA). A disulfide bridge connects residues Cys-37 and Cys-77.

Belongs to the fimbrial protein family.

The protein resides in the fimbrium. Fimbriae (also called pili), polar filaments radiating from the surface of the bacterium to a length of 0.5-1.5 micrometers and numbering 100-300 per cell, enable bacteria to colonize the epithelium of specific host organs. This is F17 fimbrial protein (F17a-A) from Escherichia coli.